The chain runs to 355 residues: Peptide chain release factor 1 (355 aa).

N5-methylglutamine is present on glutamine 233.

This sequence belongs to the prokaryotic/mitochondrial release factor family. Methylated by PrmC. Methylation increases the termination efficiency of RF1.

The protein localises to the cytoplasm. Its function is as follows. Peptide chain release factor 1 directs the termination of translation in response to the peptide chain termination codons UAG and UAA. In Dehalococcoides mccartyi (strain ATCC BAA-2100 / JCM 16839 / KCTC 5957 / BAV1), this protein is Peptide chain release factor 1.